A 378-amino-acid polypeptide reads, in one-letter code: Dual-specificity RNA methyltransferase RlmN (378 aa).

Residue Glu-97 is the Proton acceptor of the active site. The 239-residue stretch at 103–341 folds into the Radical SAM core domain; the sequence is EGDRATLCVS…VMVRKTRGDD (239 aa). Cys-110 and Cys-346 are joined by a disulfide. [4Fe-4S] cluster is bound by residues Cys-117, Cys-121, and Cys-124. S-adenosyl-L-methionine is bound by residues 171 to 172, Ser-203, 225 to 227, and Asn-303; these read GE and SLH. The active-site S-methylcysteine intermediate is the Cys-346.

It belongs to the radical SAM superfamily. RlmN family. It depends on [4Fe-4S] cluster as a cofactor.

Its subcellular location is the cytoplasm. It catalyses the reaction adenosine(2503) in 23S rRNA + 2 reduced [2Fe-2S]-[ferredoxin] + 2 S-adenosyl-L-methionine = 2-methyladenosine(2503) in 23S rRNA + 5'-deoxyadenosine + L-methionine + 2 oxidized [2Fe-2S]-[ferredoxin] + S-adenosyl-L-homocysteine. The enzyme catalyses adenosine(37) in tRNA + 2 reduced [2Fe-2S]-[ferredoxin] + 2 S-adenosyl-L-methionine = 2-methyladenosine(37) in tRNA + 5'-deoxyadenosine + L-methionine + 2 oxidized [2Fe-2S]-[ferredoxin] + S-adenosyl-L-homocysteine. Its function is as follows. Specifically methylates position 2 of adenine 2503 in 23S rRNA and position 2 of adenine 37 in tRNAs. m2A2503 modification seems to play a crucial role in the proofreading step occurring at the peptidyl transferase center and thus would serve to optimize ribosomal fidelity. The sequence is that of Dual-specificity RNA methyltransferase RlmN from Idiomarina loihiensis (strain ATCC BAA-735 / DSM 15497 / L2-TR).